A 458-amino-acid polypeptide reads, in one-letter code: Tetracycline resistance protein (458 aa).

12 consecutive transmembrane segments (helical) span residues 12–33 (HNQV…EMVL), 81–100 (LLLF…FVGH), 111–129 (FIQG…VVVA), 140–162 (AFGL…GGMV), 165–185 (YIHW…VPFL), 201–221 (MAGI…TTSY), 223–240 (FSFL…VQHI), 256–276 (VFFV…AGFV), 297–317 (GIIF…GLLV), 324–344 (YVLT…AFFI), 346–365 (AAPW…LSFT), and 432–451 (MLIL…LNVY).

This sequence belongs to the major facilitator superfamily. TCR/Tet family.

Its subcellular location is the cell membrane. Its function is as follows. Resistance to tetracycline by an active tetracycline efflux. This is an energy-dependent process that decreases the accumulation of the antibiotic in whole cells. This protein functions as a metal-tetracycline/H(+) antiporter. This is Tetracycline resistance protein (tetB) from Bacillus subtilis (strain 168).